Here is a 747-residue protein sequence, read N- to C-terminus: Sulfhydryl oxidase 1 (747 aa).

The N-terminal stretch at 1–29 (MRRCNSGSGPPPSLLLLLLWLLAVPGANA) is a signal peptide. The 121-residue stretch at 36 to 156 (YSPSDPLTLL…RERLIDALES (121 aa)) folds into the Thioredoxin domain. Residues Cys70 and Cys73 each act as nucleophile in the active site. Cystine bridges form between Cys70–Cys73 and Cys101–Cys110. Asn130 carries an N-linked (GlcNAc...) (complex) asparagine glycan. An N-linked (GlcNAc...) asparagine glycan is attached at Asn243. Cys393 and Cys405 form a disulfide bridge. The 108-residue stretch at 396-503 (SEPHFRGFPC…EDPQFPKVQW (108 aa)) folds into the ERV/ALR sulfhydryl oxidase domain. Positions 401, 408, and 412 each coordinate FAD. Ser426 is modified (phosphoserine; by FAM20C). Cys449 and Cys452 are oxidised to a cystine. Residues Asp451, His455, 478-485 (WSSHNRVN), Lys500, and Trp503 contribute to the FAD site. Cys509 and Cys512 form a disulfide bridge. Residues 573–633 (SRNSTLDPGK…HMAELQRNEQ (61 aa)) are disordered. A glycan (N-linked (GlcNAc...) asparagine) is linked at Asn575. The segment covering 621–633 (PPEHMAELQRNEQ) has biased composition (basic and acidic residues). The chain crosses the membrane as a helical span at residues 710–730 (ISLCVGLYSLSFMGLLAMYTY).

It belongs to the quiescin-sulfhydryl oxidase (QSOX) family. Monomer. It depends on FAD as a cofactor. N-glycosylated. O-glycosylated on Thr and Ser residues. Expressed in heart, placenta, lung, liver, skeletal muscle, pancreas and very weakly in brain and kidney.

The protein resides in the golgi apparatus membrane. Its subcellular location is the secreted. The catalysed reaction is 2 R'C(R)SH + O2 = R'C(R)S-S(R)CR' + H2O2. Catalyzes the oxidation of sulfhydryl groups in peptide and protein thiols to disulfides with the reduction of oxygen to hydrogen peroxide. Plays a role in disulfide bond formation in a variety of extracellular proteins. In fibroblasts, required for normal incorporation of laminin into the extracellular matrix, and thereby for normal cell-cell adhesion and cell migration. In Homo sapiens (Human), this protein is Sulfhydryl oxidase 1 (QSOX1).